A 131-amino-acid chain; its full sequence is Small ribosomal subunit protein uS8 (131 aa).

This sequence belongs to the universal ribosomal protein uS8 family. Part of the 30S ribosomal subunit. Contacts proteins S5 and S12.

Functionally, one of the primary rRNA binding proteins, it binds directly to 16S rRNA central domain where it helps coordinate assembly of the platform of the 30S subunit. This Ralstonia pickettii (strain 12J) protein is Small ribosomal subunit protein uS8.